The following is a 477-amino-acid chain: ATP synthase subunit beta (477 aa).

Residue 151–158 coordinates ATP; that stretch reads GGAGVGKT.

Belongs to the ATPase alpha/beta chains family. F-type ATPases have 2 components, CF(1) - the catalytic core - and CF(0) - the membrane proton channel. CF(1) has five subunits: alpha(3), beta(3), gamma(1), delta(1), epsilon(1). CF(0) has three main subunits: a(1), b(2) and c(9-12). The alpha and beta chains form an alternating ring which encloses part of the gamma chain. CF(1) is attached to CF(0) by a central stalk formed by the gamma and epsilon chains, while a peripheral stalk is formed by the delta and b chains.

The protein localises to the cell inner membrane. The catalysed reaction is ATP + H2O + 4 H(+)(in) = ADP + phosphate + 5 H(+)(out). In terms of biological role, produces ATP from ADP in the presence of a proton gradient across the membrane. The catalytic sites are hosted primarily by the beta subunits. The polypeptide is ATP synthase subunit beta (Bradyrhizobium diazoefficiens (strain JCM 10833 / BCRC 13528 / IAM 13628 / NBRC 14792 / USDA 110)).